We begin with the raw amino-acid sequence, 392 residues long: Putative glutamate--cysteine ligase 2 (392 aa).

The segment at 1–21 (MMPVSGWRAVSSAPASSSAGR) is disordered. The segment covering 9-19 (AVSSAPASSSA) has biased composition (low complexity).

The protein belongs to the glutamate--cysteine ligase type 2 family. YbdK subfamily.

It carries out the reaction L-cysteine + L-glutamate + ATP = gamma-L-glutamyl-L-cysteine + ADP + phosphate + H(+). Functionally, ATP-dependent carboxylate-amine ligase which exhibits weak glutamate--cysteine ligase activity. The protein is Putative glutamate--cysteine ligase 2 of Mycobacterium ulcerans (strain Agy99).